A 476-amino-acid chain; its full sequence is Angiotensinogen (476 aa).

The signal sequence occupies residues 1–24; that stretch reads MAPAGVSLRATILCLLAWAGLAAG. Asp25 bears the Beta-decarboxylated aspartate; in form angiotensin-A mark. N-linked (GlcNAc...) asparagine glycosylation is found at Asn38, Asn161, Asn295, and Asn319. Cys42 and Cys162 are joined by a disulfide.

It belongs to the serpin family. During pregnancy, exists as a disulfide-linked 2:2 heterotetramer with the proform of PRG2 and as a complex (probably a 2:2:2 heterohexamer) with pro-PRG2 and C3dg. Beta-decarboxylation of Asp-25 in angiotensin-2, by mononuclear leukocytes produces alanine. The resulting peptide form, angiotensin-A, has the same affinity for the AT1 receptor as angiotensin-2, but a higher affinity for the AT2 receptor. Post-translationally, in response to low blood pressure, the enzyme renin/REN cleaves angiotensinogen to produce angiotensin-1. Angiotensin-1 is a substrate of ACE (angiotensin converting enzyme) that removes a dipeptide to yield the physiologically active peptide angiotensin-2. Angiotensin-1 and angiotensin-2 can be further processed to generate angiotensin-3, angiotensin-4. Angiotensin 1-9 is cleaved from angiotensin-1 by ACE2 and can be further processed by ACE to produce angiotensin 1-7, angiotensin 1-5 and angiotensin 1-4. Angiotensin 1-7 has also been proposed to be cleaved from angiotensin-2 by ACE2 or from angiotensin-1 by MME (neprilysin). In terms of processing, the disulfide bond is labile. Angiotensinogen is present in the circulation in a near 40:60 ratio with the oxidized disulfide-bonded form, which preferentially interacts with receptor-bound renin. In terms of tissue distribution, expressed by the liver and secreted in plasma.

The protein localises to the secreted. In terms of biological role, essential component of the renin-angiotensin system (RAS), a potent regulator of blood pressure, body fluid and electrolyte homeostasis. Acts directly on vascular smooth muscle as a potent vasoconstrictor, affects cardiac contractility and heart rate through its action on the sympathetic nervous system, and alters renal sodium and water absorption through its ability to stimulate the zona glomerulosa cells of the adrenal cortex to synthesize and secrete aldosterone. Acts by binding to angiotensin receptors AGTR1 and AGTR2. Also binds the DEAR/FBXW7-AS1 receptor. Functionally, stimulates aldosterone release. Its function is as follows. Is a ligand for the G-protein coupled receptor MAS1. Has vasodilator and antidiuretic effects. Has an antithrombotic effect that involves MAS1-mediated release of nitric oxide from platelets. This chain is Angiotensinogen, found in Homo sapiens (Human).